A 249-amino-acid chain; its full sequence is Dof zinc finger protein DOF4.5 (249 aa).

Residues 25–79 (RVCARCDSDNTKFCYYNNYCEFQPRYFCKNCRRYWTHGGALRNIPIGGSSRAKRA) form a Dof-type zinc finger. Zn(2+) contacts are provided by Cys27, Cys30, Cys52, and Cys55.

The protein resides in the nucleus. In terms of biological role, transcription factor that binds specifically to a 5'-AA[AG]G-3' consensus core sequence. This is Dof zinc finger protein DOF4.5 (DOF4.5) from Arabidopsis thaliana (Mouse-ear cress).